The sequence spans 385 residues: S-type anion channel SLAH1 (385 aa).

Topologically, residues 1-42 (MEIPRQEIHIEIDNSIPSSKEFKTGLADAKPVVLMSALRSLH) are cytoplasmic. The chain crosses the membrane as a helical span at residues 43 to 65 (AGYFRISLSLCSQALLWKIMIAP). Residues 66 to 81 (ESPSMSHMHSKLPSMA) are Extracellular-facing. Residues 82 to 102 (FHLLWYLALVTQVSLCFLYAL) traverse the membrane as a helical segment. The Cytoplasmic segment spans residues 103-114 (KCIFFFDKVKEE). The helical transmembrane segment at 115-135 (FLHYIGVNYLYAPSISWLLML) threads the bilayer. Over 136 to 150 (QSAPMMEPNSVLYQT) the chain is Extracellular. Residues 151–171 (LFWIFAVPVLTLDIKLYGQWF) form a helical membrane-spanning segment. Over 172-176 (TTEKR) the chain is Cytoplasmic. Residues 177–197 (FLSMLANPASQVSVIANLVAA) form a helical membrane-spanning segment. At 198 to 207 (RGAAEMGWNE) the chain is on the extracellular side. Residues 208–228 (CALCMFSLGMVHYLVIFVTLY) form a helical membrane-spanning segment. Residues 229–243 (QRLPGGNNFPAKLRP) are Cytoplasmic-facing. Residues 244–264 (IFFLFVAAPAMASLAWNSICG) form a helical membrane-spanning segment. Thr265 is a topological domain (extracellular). The helical transmembrane segment at 266–286 (FDAVAKMLFFLSLFIFMSLVC) threads the bilayer. At 287 to 299 (RPNLFKKSMKRFN) the chain is on the cytoplasmic side. Residues 300-320 (VAWWAYSFPLTFLALDSVQYA) traverse the membrane as a helical segment. Residues 321-330 (QEVKDPVGSG) are Extracellular-facing. Residues 331–351 (LMLIFSSISVLIFLGMMVLTA) traverse the membrane as a helical segment. Residues 352 to 385 (ANSNRLLRHDPVLGSATDPKDKQKTLSLNATNQN) are Cytoplasmic-facing. The disordered stretch occupies residues 366–385 (SATDPKDKQKTLSLNATNQN). The segment covering 376–385 (TLSLNATNQN) has biased composition (polar residues).

It belongs to the SLAC1 S-type anion channel family. In terms of assembly, homotrimer. Expressed in the vascular systems of root.

It is found in the cell membrane. Functionally, slow, weak voltage-dependent S-type anion efflux channel involved in maintenance of anion homeostasis. The protein is S-type anion channel SLAH1 (SLAH1) of Arabidopsis thaliana (Mouse-ear cress).